The chain runs to 38 residues: Phospholipase A2 1 (38 aa).

3 residues coordinate Ca(2+): Y28, G30, and G32.

The protein belongs to the phospholipase A2 family. Group I subfamily. Ca(2+) is required as a cofactor. As to expression, expressed by the venom gland.

The protein localises to the secreted. The catalysed reaction is a 1,2-diacyl-sn-glycero-3-phosphocholine + H2O = a 1-acyl-sn-glycero-3-phosphocholine + a fatty acid + H(+). Its function is as follows. Snake venom phospholipase A2 (PLA2) that inhibits neuromuscular transmission by blocking acetylcholine release from the nerve termini. PLA2 catalyzes the calcium-dependent hydrolysis of the 2-acyl groups in 3-sn-phosphoglycerides. This is Phospholipase A2 1 from Calliophis bivirgatus (Blue Malaysian coral snake).